Reading from the N-terminus, the 398-residue chain is Palmitoyl-[acyl-carrier-protein] 4-desaturase 3, chloroplastic (398 aa).

A chloroplast-targeting transit peptide spans 1–29; sequence MALRSLFLPNAFPNASSFRGGSRRGAAPR. Fe cation-binding residues include Glu-139, Glu-177, His-180, Glu-230, Glu-263, and His-266.

The protein belongs to the fatty acid desaturase type 2 family. In terms of assembly, homodimer. Fe(2+) serves as cofactor. As to expression, preferentially expressed in the flower labellum. Low expression in leaves.

It localises to the plastid. The protein localises to the chloroplast stroma. It catalyses the reaction hexadecanoyl-[ACP] + 2 reduced [2Fe-2S]-[ferredoxin] + O2 + 2 H(+) = (4Z)-hexadecenoyl-[ACP] + 2 oxidized [2Fe-2S]-[ferredoxin] + 2 H2O. Its pathway is lipid metabolism; fatty acid metabolism. Its function is as follows. Converts palmitoyl-ACP to (4Z)-hexadec-4-enoyl-ACP by introduction of a cis double bond between carbons 4 and 5 of the acyl chain. This is Palmitoyl-[acyl-carrier-protein] 4-desaturase 3, chloroplastic (SAD3) from Ophrys arachnitiformis subsp. archipelagi (Orchid).